A 342-amino-acid polypeptide reads, in one-letter code: RNA 3'-terminal phosphate cyclase (342 aa).

The protein belongs to the RNA 3'-terminal cyclase family. Type 1 subfamily.

It localises to the cytoplasm. The enzyme catalyses a 3'-end 3'-phospho-ribonucleotide-RNA + GTP = a 3'-end 2',3'-cyclophospho-ribonucleotide-RNA + GMP + diphosphate. Its activity is regulated as follows. Inhibited by GMP. Functionally, catalyzes the GTP-dependent conversion of 3'-phosphate to a 2',3'-cyclic phosphodiester at the end of RNA. The biological role of this enzyme is unknown but it is likely to function in some aspects of cellular RNA processing. The sequence is that of RNA 3'-terminal phosphate cyclase from Pyrococcus furiosus (strain ATCC 43587 / DSM 3638 / JCM 8422 / Vc1).